Consider the following 421-residue polypeptide: Probable 26S proteasome regulatory subunit rpn6 (421 aa).

In terms of domain architecture, PCI spans 221–390 (DFKTAYSYFY…GCLIVYDEPQ (170 aa)).

The protein belongs to the proteasome subunit S9 family. Component of the lid subcomplex of the 19S proteasome regulatory particle complex (also named PA700 complex). The 26S proteasome consists of a 20S proteasome core and two 19S regulatory subunits.

Functionally, component of the lid subcomplex of the 26S proteasome, a multiprotein complex involved in the ATP-dependent degradation of ubiquitinated proteins. In the complex, rpn6 is required for proteasome assembly. The chain is Probable 26S proteasome regulatory subunit rpn6 (rpn6) from Schizosaccharomyces pombe (strain 972 / ATCC 24843) (Fission yeast).